Here is a 298-residue protein sequence, read N- to C-terminus: N-acetylmuramic acid 6-phosphate etherase (298 aa).

Positions 55 to 218 constitute an SIS domain; the sequence is IHTQVSGGGR…STGLMIKSGK (164 aa). E83 (proton donor) is an active-site residue. E114 is a catalytic residue.

The protein belongs to the GCKR-like family. MurNAc-6-P etherase subfamily. In terms of assembly, homodimer.

The enzyme catalyses N-acetyl-D-muramate 6-phosphate + H2O = N-acetyl-D-glucosamine 6-phosphate + (R)-lactate. It functions in the pathway amino-sugar metabolism; 1,6-anhydro-N-acetylmuramate degradation. It participates in amino-sugar metabolism; N-acetylmuramate degradation. Its pathway is cell wall biogenesis; peptidoglycan recycling. Functionally, specifically catalyzes the cleavage of the D-lactyl ether substituent of MurNAc 6-phosphate, producing GlcNAc 6-phosphate and D-lactate. Together with AnmK, is also required for the utilization of anhydro-N-acetylmuramic acid (anhMurNAc) either imported from the medium or derived from its own cell wall murein, and thus plays a role in cell wall recycling. In Escherichia coli O127:H6 (strain E2348/69 / EPEC), this protein is N-acetylmuramic acid 6-phosphate etherase.